The primary structure comprises 48 residues: CGDINAACKEDCDCCGYTTACDCYWSSSCKCREAAIVIYTAPKKKLTC.

5 disulfide bridges follow: Cys-1/Cys-15, Cys-8/Cys-21, Cys-12/Cys-48, Cys-14/Cys-31, and Cys-23/Cys-29.

It belongs to the neurotoxin 03 (Tx2) family. 05 subfamily. In terms of tissue distribution, expressed by the venom gland.

It localises to the secreted. Its function is as follows. Insecticidal neurotoxin that reversibly inhibits the N-methyl-D-aspartate (NMDA)-subtype of ionotropic glutamate receptor (GRIN) and inhibits inactivation of insect sodium channels (Nav). Inhibits glutamate uptake in rat brain synaptosomes. In vivo, induces immediate excitatory effects when injected intrathoracically in houseflies and cockroaches. The sequence is that of Delta-ctenitoxin-Pn1b from Phoneutria nigriventer (Brazilian armed spider).